The following is a 581-amino-acid chain: NADP-dependent malic enzyme 1 (581 aa).

The active-site Proton donor is Tyr129. Arg182 serves as a coordination point for NADP(+). Catalysis depends on Lys200, which acts as the Proton acceptor. A divalent metal cation is bound by residues Glu272, Asp273, and Asp296. Residues Asp296, 325-341 (LFLG…ELIA), and Asn437 contribute to the NADP(+) site.

This sequence belongs to the malic enzymes family. Homohexamers and homooctamers. Mg(2+) serves as cofactor. It depends on Mn(2+) as a cofactor. Specifically expressed in roots (only in steles of secondary roots).

It is found in the cytoplasm. It carries out the reaction (S)-malate + NADP(+) = pyruvate + CO2 + NADPH. The catalysed reaction is oxaloacetate + H(+) = pyruvate + CO2. This Arabidopsis thaliana (Mouse-ear cress) protein is NADP-dependent malic enzyme 1 (NADP-ME1).